Consider the following 367-residue polypeptide: Cyclic AMP-responsive element-binding protein 3-like protein 4 (367 aa).

A required for transcriptional activation region spans residues Met-1–Asn-52. Over Met-1–Ser-267 the chain is Cytoplasmic. Residues Glu-58–Ser-81 are disordered. The region spanning Ile-189 to Leu-252 is the bZIP domain. Positions Lys-191–Lys-230 are basic motif. The interval Leu-231–Leu-252 is leucine-zipper. Residues Thr-268–Phe-288 traverse the membrane as a helical; Signal-anchor for type II membrane protein segment. The Lumenal segment spans residues Gln-289–Met-367. N-linked (GlcNAc...) asparagine glycosylation is present at Asn-338.

It belongs to the bZIP family. ATF subfamily. As to quaternary structure, binds DNA as a dimer. Forms a heterodimer with CREM isoform Delta. Post-translationally, controlled by regulated intramembrane proteolysis (RIP). Following ER stress a fragment containing the cytoplasmic transcription factor domain is released by proteolysis. The cleavage seems to be performed sequentially by site-1 and site-2 proteases (PS1 and PS2). PS1 cleavage may be suppressed by a determinant in the C-terminal region.

The protein localises to the endoplasmic reticulum membrane. It is found in the nucleus. Its function is as follows. Transcriptional activator that may play a role in the unfolded protein response. Binds to the UPR element (UPRE) but not to CRE element. Preferentially binds DNA with to the consensus sequence 5'-T[GT]ACGT[GA][GT]-3' and has transcriptional activation activity from UPRE. Binds to NF-kappa-B site and has transcriptional activation activity from NF-kappa-B-containing regulatory elements. Increases the binding of CREM isoform Delta with CRE. The CREM isoform Delta-CREB3L4 heterodimer functions through CRE but not through UPRE and may recruit HIRA to CRE to regulate histone exchange. In Rattus norvegicus (Rat), this protein is Cyclic AMP-responsive element-binding protein 3-like protein 4 (Creb3l4).